Here is a 502-residue protein sequence, read N- to C-terminus: Protein adenylyltransferase Fic (502 aa).

Residues 1–24 (MAMATGKATEEEQPEQGQQQQQLQ) form a disordered region. Positions 15-24 (EQGQQQQQLQ) are enriched in low complexity. The helical transmembrane segment at 38 to 60 (FALFFIAGCLAAFGFHALTSSSG) threads the bilayer. 2 TPR repeats span residues 122–155 (AMGA…APKH) and 156–190 (PEVL…NPSN). Residues 247–252 (SVGIEG) carry the Inhibitory (S/T)XXXE(G/N) motif motif. Residues Glu251 and 332–335 (VGGH) each bind ATP. One can recognise a Fido domain in the interval 301–436 (ITLKDILELH…IRPFVRFIAD (136 aa)). The active site involves His379. ATP-binding positions include 383–390 (DGNGRTSR), 415–416 (YY), and Asn423. The tract at residues 478-502 (SPELYESGSGSGAGAGAGSGQKGMP) is disordered. Gly residues predominate over residues 486–502 (SGSGAGAGAGSGQKGMP).

It belongs to the fic family. As to quaternary structure, homodimer.

It localises to the membrane. The catalysed reaction is L-tyrosyl-[protein] + ATP = O-(5'-adenylyl)-L-tyrosyl-[protein] + diphosphate. It carries out the reaction L-threonyl-[protein] + ATP = 3-O-(5'-adenylyl)-L-threonyl-[protein] + diphosphate. The enzyme catalyses 3-O-(5'-adenylyl)-L-threonyl-[protein] + H2O = L-threonyl-[protein] + AMP + H(+). With respect to regulation, the side chain of Glu-251 determines which of the two opposing activities (AMPylase or de-AMPylase) will take place. In response to endoplasmic reticulum stress, mediates de-AMPylase activity. Adenylyltransferase activity is inhibited by the inhibitory helix present at the N-terminus: Glu-251 binds ATP and competes with ATP-binding at Arg-390, thereby preventing adenylyltransferase activity. In unstressed cells, disengagement of Glu-251 promotes adenylyltransferase activity. Activation dissociates ATP-binding from Glu-251, allowing ordered binding of the entire ATP moiety with the alpha-phosphate in an orientation that is productive for accepting an incoming target hydroxyl side chain. Functionally, protein that can both mediate the addition of adenosine 5'-monophosphate (AMP) to specific residues of target proteins (AMPylation), and the removal of the same modification from target proteins (de-AMPylation), depending on the context. The side chain of Glu-251 determines which of the two opposing activities (AMPylase or de-AMPylase) will take place. Acts as a key regulator of the unfolded protein response (UPR) by mediating AMPylation or de-AMPylation of Hsc70-3/BiP. In unstressed cells, acts as an adenylyltransferase by mediating AMPylation of Hsc70-3/BiP at 'Thr-518', thereby inactivating it. In response to endoplasmic reticulum stress, acts as a phosphodiesterase by mediating removal of ATP (de-AMPylation) from Hsc70-3/BiP at 'Thr-518', leading to restore HSPA5/BiP activity. This is Protein adenylyltransferase Fic from Drosophila mojavensis (Fruit fly).